Here is a 77-residue protein sequence, read N- to C-terminus: Translation initiation factor IF-1, chloroplastic (77 aa).

The S1-like domain occupies 1-71 (MKEQKLIHEG…TRGRIIYRLR (71 aa)).

It belongs to the IF-1 family. As to quaternary structure, component of the 30S ribosomal translation pre-initiation complex which assembles on the 30S ribosome in the order IF-2 and IF-3, IF-1 and N-formylmethionyl-tRNA(fMet); mRNA recruitment can occur at any time during PIC assembly.

The protein resides in the plastid. Its subcellular location is the chloroplast. In terms of biological role, one of the essential components for the initiation of protein synthesis. Stabilizes the binding of IF-2 and IF-3 on the 30S subunit to which N-formylmethionyl-tRNA(fMet) subsequently binds. Helps modulate mRNA selection, yielding the 30S pre-initiation complex (PIC). Upon addition of the 50S ribosomal subunit IF-1, IF-2 and IF-3 are released leaving the mature 70S translation initiation complex. The protein is Translation initiation factor IF-1, chloroplastic of Calycanthus floridus var. glaucus (Eastern sweetshrub).